Here is a 108-residue protein sequence, read N- to C-terminus: T-cell acute lymphocytic leukemia protein 2 (108 aa).

The bHLH domain maps to 2–54; the sequence is TRKIFTNTRERWRQQNVNSAFAKLRKLIPTHPPDKKLSKNETLRLAMRYINFL. The disordered stretch occupies residues 89 to 108; that stretch reads DRTLLENYQVPSPGPSHHIP.

This chain is T-cell acute lymphocytic leukemia protein 2 (TAL2), found in Homo sapiens (Human).